The chain runs to 141 residues: Actin-depolymerizing factor 9 (141 aa).

Phosphoserine is present on Ser-8. The region spanning 8-141 (SGMWMTDDCK…GFDKIQDRAK (134 aa)) is the ADF-H domain.

It belongs to the actin-binding proteins ADF family.

The protein resides in the cytoplasm. Its subcellular location is the cytoskeleton. Its function is as follows. Does not display typical F-actin depolymerizing activity. Exhibits a high ability to stabilize and cross-link actin filaments. Functions as an actin bundling protein with the highest efficiency under acidic conditions. May play a role in the modulation of levels of histone H3 lysine 4 trimethylation and H3 lysine 9 and 14 acetylation at the FLC locus. In Arabidopsis thaliana (Mouse-ear cress), this protein is Actin-depolymerizing factor 9 (ADF9).